A 1217-amino-acid chain; its full sequence is Disease resistance protein RPS4 (1217 aa).

The region spanning 14–175 is the TIR domain; that stretch reads PQHQVFINFR…EIVKAVKTAL (162 aa). 23-28 is an NAD(+) binding site; that stretch reads RGADLR. The important for interaction with RRS1 stretch occupies residues 33-34; it reads SH. Glu88 is a catalytic residue. Positions 211–472 constitute an NB-ARC domain; that stretch reads EQRLKDLEEK…FRSQDKDYVE (262 aa). LRR repeat units lie at residues 581–606, 614–636, 637–659, 682–706, 708–728, 729–749, 750–774, 796–818, 819–842, 843–860, and 861–887; these read MGNL…KINI, LKEV…DFNP, INLV…DKDT, AEKL…MKKM, MLAF…EMNL, ISLK…PLIS, DNIE…KLQR, LKAL…EIDI, SFLN…SVQY, LCLS…GISQ, and LSQL…NLQC. Residues 1161-1195 form a disordered region; it reads TTEGVDGRVNKKKKTRMDNGRPKKKQRSGRDDNQT. The short motif at 1170–1177 is the Nuclear localization signal element; it reads NKKKKTRM.

The protein belongs to the disease resistance TIR-NB-LRR family. In terms of assembly, interacts with EDS1. Interacts with SRFR1. Interacts with RRS1.

The protein localises to the endomembrane system. The protein resides in the cytoplasm. Its subcellular location is the nucleus. The enzyme catalyses NAD(+) + H2O = ADP-D-ribose + nicotinamide + H(+). Functionally, disease resistance (R) protein that specifically recognizes the AvrRps4 type III effector avirulence protein from P.syringae. Resistance proteins guard the plant against pathogens that contain an appropriate avirulence protein via an indirect interaction with this avirulence protein. That triggers a defense system including the hypersensitive response, which restricts the pathogen growth. Probably acts as a NAD(+) hydrolase (NADase): in response to activation, catalyzes cleavage of NAD(+) into ADP-D-ribose (ADPR) and nicotinamide; NAD(+) cleavage triggering a defense system that promotes cell death. The combined presence of both regular and alternative RPS4 transcripts with truncated open reading frames (ORFs) is necessary for function. RPS4 function is regulated at multiple levels, including gene expression, alternative splicing, and protein stability. When over-expressed, confers temperature-conditioned EDS1-dependent auto-immunity. Heterodimerization with RRS1 is required to form a functional complex to recognize AvrRps4 and PopP2. Abscisic acid deficiency enhances nuclear accumulation of RPS4 and its cell death-inducing activity. This chain is Disease resistance protein RPS4, found in Arabidopsis thaliana (Mouse-ear cress).